Consider the following 382-residue polypeptide: GDP-mannose transporter (382 aa).

The Cytoplasmic segment spans residues 1–40; the sequence is MADDKKTNEYTIEMDKLDHGNKDFEAPAPAVRPRGPPVAQ. Residues 41 to 61 traverse the membrane as a helical segment; it reads LANNPILPVLAYCGSSILMTV. The Lumenal segment spans residues 62–71; the sequence is MNKYVLSGRD. The helical transmembrane segment at 72 to 92 threads the bilayer; sequence FNLNFFLLCVQSIVCIVAIQT. Over 93–110 the chain is Cytoplasmic; the sequence is CKVSKLITYRDFNSDEAK. A helical membrane pass occupies residues 111–127; the sequence is KWFPITLLLIGMIYTGS. The Lumenal portion of the chain corresponds to 128–134; sequence KALQYLS. Residues 135 to 151 form a helical membrane-spanning segment; the sequence is IPVYTIFKNLTIILIAY. The Cytoplasmic segment spans residues 152–160; sequence GEVLWFGGS. A helical transmembrane segment spans residues 161-182; sequence VTGLTLFSFGLMVLSSIIAAWA. Over 183-200 the chain is Lumenal; it reads DIKHAVESSGDATAKVST. Residues 201 to 221 form a helical membrane-spanning segment; the sequence is LNAGYIWMLINCLCTSSYVLG. At 222 to 233 the chain is on the cytoplasmic side; that stretch reads MRKRIKLTNFKD. Residues 234–254 form a helical membrane-spanning segment; the sequence is FDTMFYNNLLSIPVLLVLTFL. Over 255–274 the chain is Lumenal; sequence MEDWSSANIARNFPSTDRNG. The chain crosses the membrane as a helical span at residues 275–295; sequence ILFAMILSGLSSVFISYTSAW. Over 296 to 303 the chain is Cytoplasmic; it reads CVRVTSST. The helical transmembrane segment at 304 to 324 threads the bilayer; the sequence is TYSMVGALNKLPIALSGLIFF. The Lumenal portion of the chain corresponds to 325–327; sequence DAP. A helical transmembrane segment spans residues 328-348; sequence VTFPSVSAIVVGFISGIVYAV. The Cytoplasmic portion of the chain corresponds to 349–382; that stretch reads AKIKQSAKPKTGVLPMSNPPVSASSQSMRDSLRS. The interval 358–382 is disordered; the sequence is KTGVLPMSNPPVSASSQSMRDSLRS. A compositionally biased stretch (polar residues) spans 367 to 382; that stretch reads PPVSASSQSMRDSLRS.

The protein belongs to the TPT transporter family. SLC35D subfamily. Homooligomer.

The protein localises to the golgi apparatus membrane. The protein resides in the cytoplasmic vesicle membrane. Its subcellular location is the endoplasmic reticulum membrane. In terms of biological role, involved in the import of GDP-mannose from the cytoplasm into the Golgi lumen. The protein is GDP-mannose transporter (gmt1) of Aspergillus fumigatus (strain CBS 144.89 / FGSC A1163 / CEA10) (Neosartorya fumigata).